A 333-amino-acid chain; its full sequence is Ketol-acid reductoisomerase (NADP(+)) (333 aa).

Residues 1-179 enclose the KARI N-terminal Rossmann domain; sequence MFYDDDADLS…GGTRAGVIKT (179 aa). NADP(+) contacts are provided by residues 22–25, Lys45, Ser48, Ser50, and 80–83; these read YGSQ and DTAQ. The active site involves His105. Gly131 is a binding site for NADP(+). The KARI C-terminal knotted domain occupies 180–325; that stretch reads TFKDETETDL…KKLRDLMSWV (146 aa). Mg(2+) contacts are provided by Asp188, Glu192, Glu224, and Glu228. Ser249 is a substrate binding site.

It belongs to the ketol-acid reductoisomerase family. It depends on Mg(2+) as a cofactor.

The catalysed reaction is (2R)-2,3-dihydroxy-3-methylbutanoate + NADP(+) = (2S)-2-acetolactate + NADPH + H(+). It carries out the reaction (2R,3R)-2,3-dihydroxy-3-methylpentanoate + NADP(+) = (S)-2-ethyl-2-hydroxy-3-oxobutanoate + NADPH + H(+). Its pathway is amino-acid biosynthesis; L-isoleucine biosynthesis; L-isoleucine from 2-oxobutanoate: step 2/4. It functions in the pathway amino-acid biosynthesis; L-valine biosynthesis; L-valine from pyruvate: step 2/4. Functionally, involved in the biosynthesis of branched-chain amino acids (BCAA). Catalyzes an alkyl-migration followed by a ketol-acid reduction of (S)-2-acetolactate (S2AL) to yield (R)-2,3-dihydroxy-isovalerate. In the isomerase reaction, S2AL is rearranged via a Mg-dependent methyl migration to produce 3-hydroxy-3-methyl-2-ketobutyrate (HMKB). In the reductase reaction, this 2-ketoacid undergoes a metal-dependent reduction by NADPH to yield (R)-2,3-dihydroxy-isovalerate. This chain is Ketol-acid reductoisomerase (NADP(+)), found in Mycobacterium ulcerans (strain Agy99).